Here is a 241-residue protein sequence, read N- to C-terminus: Pyridoxine 5'-phosphate synthase (241 aa).

Residue Asn-7 coordinates 3-amino-2-oxopropyl phosphate. 9–10 is a 1-deoxy-D-xylulose 5-phosphate binding site; it reads DH. Arg-18 contacts 3-amino-2-oxopropyl phosphate. His-43 (proton acceptor) is an active-site residue. Residues Arg-45 and His-50 each contribute to the 1-deoxy-D-xylulose 5-phosphate site. Glu-70 acts as the Proton acceptor in catalysis. Residue Thr-100 participates in 1-deoxy-D-xylulose 5-phosphate binding. The active-site Proton donor is the His-191. Residues Ser-192 and 213–214 each bind 3-amino-2-oxopropyl phosphate; that span reads GH.

It belongs to the PNP synthase family. As to quaternary structure, homooctamer; tetramer of dimers.

It localises to the cytoplasm. The catalysed reaction is 3-amino-2-oxopropyl phosphate + 1-deoxy-D-xylulose 5-phosphate = pyridoxine 5'-phosphate + phosphate + 2 H2O + H(+). Its pathway is cofactor biosynthesis; pyridoxine 5'-phosphate biosynthesis; pyridoxine 5'-phosphate from D-erythrose 4-phosphate: step 5/5. Catalyzes the complicated ring closure reaction between the two acyclic compounds 1-deoxy-D-xylulose-5-phosphate (DXP) and 3-amino-2-oxopropyl phosphate (1-amino-acetone-3-phosphate or AAP) to form pyridoxine 5'-phosphate (PNP) and inorganic phosphate. The polypeptide is Pyridoxine 5'-phosphate synthase (Nitrosomonas eutropha (strain DSM 101675 / C91 / Nm57)).